The chain runs to 176 residues: Endoribonuclease YbeY (176 aa).

His-128, His-132, and His-138 together coordinate Zn(2+).

This sequence belongs to the endoribonuclease YbeY family. It depends on Zn(2+) as a cofactor.

The protein localises to the cytoplasm. Functionally, single strand-specific metallo-endoribonuclease involved in late-stage 70S ribosome quality control and in maturation of the 3' terminus of the 16S rRNA. The sequence is that of Endoribonuclease YbeY from Zymomonas mobilis subsp. mobilis (strain ATCC 31821 / ZM4 / CP4).